A 355-amino-acid chain; its full sequence is Peptide chain release factor 1 (355 aa).

Gln-233 is modified (N5-methylglutamine).

The protein belongs to the prokaryotic/mitochondrial release factor family. Methylated by PrmC. Methylation increases the termination efficiency of RF1.

It localises to the cytoplasm. Peptide chain release factor 1 directs the termination of translation in response to the peptide chain termination codons UAG and UAA. This Bacillus cytotoxicus (strain DSM 22905 / CIP 110041 / 391-98 / NVH 391-98) protein is Peptide chain release factor 1.